The chain runs to 149 residues: Large ribosomal subunit protein eL19 (149 aa).

Positions 46-99 (EDGTIEAKTAKGNSRGRARKRQQKRAYGHKKGHGSRKGRSGGRQNEKEDWQSRI) are disordered. Residues 59-85 (SRGRARKRQQKRAYGHKKGHGSRKGRS) show a composition bias toward basic residues. Residues 89–99 (QNEKEDWQSRI) are compositionally biased toward basic and acidic residues.

The protein belongs to the eukaryotic ribosomal protein eL19 family. Part of the 50S ribosomal subunit.

Functionally, binds to the 23S rRNA. This is Large ribosomal subunit protein eL19 from Natronomonas pharaonis (strain ATCC 35678 / DSM 2160 / CIP 103997 / JCM 8858 / NBRC 14720 / NCIMB 2260 / Gabara) (Halobacterium pharaonis).